A 149-amino-acid polypeptide reads, in one-letter code: Large ribosomal subunit protein bL9 (149 aa).

This sequence belongs to the bacterial ribosomal protein bL9 family.

Binds to the 23S rRNA. This chain is Large ribosomal subunit protein bL9, found in Persephonella marina (strain DSM 14350 / EX-H1).